The primary structure comprises 176 residues: MHATTIITVRKGGKVVMAGDGQVSLGQTVMKGNARKVRRLSKGDVIAGFAGATADAFTLLERLEAKLEQYPDQLMRAAVELAKDWRTNKYLRNLEAMMLVADRTVTLAITGNGDVLEPEHGTIAIGSGGNYAFAAARALMDSDKSAEEIARRALEIAGDICVYTNHNVVVETLDAE.

Threonine 4 is an active-site residue. Na(+) is bound by residues glycine 158, cysteine 161, and threonine 164.

The protein belongs to the peptidase T1B family. HslV subfamily. A double ring-shaped homohexamer of HslV is capped on each side by a ring-shaped HslU homohexamer. The assembly of the HslU/HslV complex is dependent on binding of ATP.

The protein resides in the cytoplasm. The enzyme catalyses ATP-dependent cleavage of peptide bonds with broad specificity.. Its activity is regulated as follows. Allosterically activated by HslU binding. Functionally, protease subunit of a proteasome-like degradation complex believed to be a general protein degrading machinery. This chain is ATP-dependent protease subunit HslV, found in Rhizobium meliloti (strain 1021) (Ensifer meliloti).